A 275-amino-acid polypeptide reads, in one-letter code: Two-component response regulator PprB (275 aa).

One can recognise a Response regulatory domain in the interval 10–128 (SVLIIDDEPQ…ELLHGLERLE (119 aa)). D60 carries the post-translational modification 4-aspartylphosphate. The segment at 173–205 (SQPSALRSEDSQPSAPPAPVAESQVSPSNPLFG) is disordered. The region spanning 200–265 (SNPLFGKLSP…QLALALSPAA (66 aa)) is the HTH luxR-type domain. The H-T-H motif DNA-binding region spans 224–243 (NYQIAYELGITENTVKLYVS).

In terms of processing, phosphorylated by PprA.

Member of the two-component regulatory system PprA/PprB involved in biofilm formation by controlling the expression of many related genes including type IVb pili major subunit flp pilin, adhesin bapA or cupE fimbriae. Functions as a transcription regulator by direct binding to promoter regions. Negatively regulates its own transcription. This is Two-component response regulator PprB from Pseudomonas aeruginosa (strain ATCC 15692 / DSM 22644 / CIP 104116 / JCM 14847 / LMG 12228 / 1C / PRS 101 / PAO1).